The chain runs to 664 residues: UvrABC system protein B (664 aa).

The region spanning 25-412 (KGLVSGLTDQ…LQVVEQLVRP (388 aa)) is the Helicase ATP-binding domain. 38 to 45 (GVTGSGKT) contacts ATP. Residues 91–114 (YYDYYQPEAYVPQKDMYIEKDSDI) carry the Beta-hairpin motif. In terms of domain architecture, Helicase C-terminal spans 428–594 (QIDDLLEEVK…GIRKAIKDIN (167 aa)). A UVR domain is found at 620–655 (ARLIKELESQMKKAAKNLEFERAALIRDRVVELRAA).

The protein belongs to the UvrB family. As to quaternary structure, forms a heterotetramer with UvrA during the search for lesions. Interacts with UvrC in an incision complex.

The protein localises to the cytoplasm. Functionally, the UvrABC repair system catalyzes the recognition and processing of DNA lesions. A damage recognition complex composed of 2 UvrA and 2 UvrB subunits scans DNA for abnormalities. Upon binding of the UvrA(2)B(2) complex to a putative damaged site, the DNA wraps around one UvrB monomer. DNA wrap is dependent on ATP binding by UvrB and probably causes local melting of the DNA helix, facilitating insertion of UvrB beta-hairpin between the DNA strands. Then UvrB probes one DNA strand for the presence of a lesion. If a lesion is found the UvrA subunits dissociate and the UvrB-DNA preincision complex is formed. This complex is subsequently bound by UvrC and the second UvrB is released. If no lesion is found, the DNA wraps around the other UvrB subunit that will check the other stand for damage. The polypeptide is UvrABC system protein B (Dehalococcoides mccartyi (strain CBDB1)).